Reading from the N-terminus, the 176-residue chain is Cytochrome b (176 aa).

Helical transmembrane passes span F33–M53, W77–I98, and W113–L133. Heme b-binding residues include H83 and H97.

The protein belongs to the cytochrome b family. In terms of assembly, the cytochrome bc1 complex contains 11 subunits: 3 respiratory subunits (MT-CYB, CYC1 and UQCRFS1), 2 core proteins (UQCRC1 and UQCRC2) and 6 low-molecular weight proteins (UQCRH/QCR6, UQCRB/QCR7, UQCRQ/QCR8, UQCR10/QCR9, UQCR11/QCR10 and a cleavage product of UQCRFS1). This cytochrome bc1 complex then forms a dimer. The cofactor is heme b.

Its subcellular location is the mitochondrion inner membrane. Component of the ubiquinol-cytochrome c reductase complex (complex III or cytochrome b-c1 complex) that is part of the mitochondrial respiratory chain. The b-c1 complex mediates electron transfer from ubiquinol to cytochrome c. Contributes to the generation of a proton gradient across the mitochondrial membrane that is then used for ATP synthesis. The chain is Cytochrome b (MT-CYB) from Eumops perotis (Western bonneted bat).